Reading from the N-terminus, the 414-residue chain is Gamma-glutamyl phosphate reductase (414 aa).

The protein belongs to the gamma-glutamyl phosphate reductase family.

It is found in the cytoplasm. The catalysed reaction is L-glutamate 5-semialdehyde + phosphate + NADP(+) = L-glutamyl 5-phosphate + NADPH + H(+). The protein operates within amino-acid biosynthesis; L-proline biosynthesis; L-glutamate 5-semialdehyde from L-glutamate: step 2/2. In terms of biological role, catalyzes the NADPH-dependent reduction of L-glutamate 5-phosphate into L-glutamate 5-semialdehyde and phosphate. The product spontaneously undergoes cyclization to form 1-pyrroline-5-carboxylate. The chain is Gamma-glutamyl phosphate reductase from Caldanaerobacter subterraneus subsp. tengcongensis (strain DSM 15242 / JCM 11007 / NBRC 100824 / MB4) (Thermoanaerobacter tengcongensis).